The sequence spans 251 residues: Ribosome maturation factor RimP (251 aa).

A disordered region spans residues 198-251; it reads NLGLEPPAAPHAKISEKTTKNTKPKKKPAPTNTKKHRLAAERARRGEIEPDEGD. The segment covering 217–234 has biased composition (basic residues); sequence KNTKPKKKPAPTNTKKHR. Basic and acidic residues predominate over residues 235–245; it reads LAAERARRGEI.

The protein belongs to the RimP family.

It localises to the cytoplasm. Its function is as follows. Required for maturation of 30S ribosomal subunits. In Bradyrhizobium diazoefficiens (strain JCM 10833 / BCRC 13528 / IAM 13628 / NBRC 14792 / USDA 110), this protein is Ribosome maturation factor RimP.